A 698-amino-acid chain; its full sequence is Elongation factor G 2 (698 aa).

Residues 8-290 (ERYRNIGIMA…AVVDYLPSPV (283 aa)) form the tr-type G domain. GTP is bound by residues 17–24 (AHIDAGKT), 88–92 (DTPGH), and 142–145 (NKMD).

Belongs to the TRAFAC class translation factor GTPase superfamily. Classic translation factor GTPase family. EF-G/EF-2 subfamily.

It localises to the cytoplasm. In terms of biological role, catalyzes the GTP-dependent ribosomal translocation step during translation elongation. During this step, the ribosome changes from the pre-translocational (PRE) to the post-translocational (POST) state as the newly formed A-site-bound peptidyl-tRNA and P-site-bound deacylated tRNA move to the P and E sites, respectively. Catalyzes the coordinated movement of the two tRNA molecules, the mRNA and conformational changes in the ribosome. The protein is Elongation factor G 2 of Methylococcus capsulatus (strain ATCC 33009 / NCIMB 11132 / Bath).